A 129-amino-acid polypeptide reads, in one-letter code: Large ribosomal subunit protein bL19 (129 aa).

Belongs to the bacterial ribosomal protein bL19 family.

In terms of biological role, this protein is located at the 30S-50S ribosomal subunit interface and may play a role in the structure and function of the aminoacyl-tRNA binding site. This Burkholderia mallei (strain NCTC 10247) protein is Large ribosomal subunit protein bL19.